A 340-amino-acid chain; its full sequence is S-adenosylmethionine:tRNA ribosyltransferase-isomerase (340 aa).

The protein belongs to the QueA family. As to quaternary structure, monomer.

The protein localises to the cytoplasm. It catalyses the reaction 7-aminomethyl-7-carbaguanosine(34) in tRNA + S-adenosyl-L-methionine = epoxyqueuosine(34) in tRNA + adenine + L-methionine + 2 H(+). The protein operates within tRNA modification; tRNA-queuosine biosynthesis. Its function is as follows. Transfers and isomerizes the ribose moiety from AdoMet to the 7-aminomethyl group of 7-deazaguanine (preQ1-tRNA) to give epoxyqueuosine (oQ-tRNA). This Nitratiruptor sp. (strain SB155-2) protein is S-adenosylmethionine:tRNA ribosyltransferase-isomerase.